A 636-amino-acid polypeptide reads, in one-letter code: uncharacterized protein (636 aa).

The zn(2)-C6 fungal-type DNA-binding region spans 10 to 36 (CLACRRKKVKCNRQYPCTRCLKYGEAC). A compositionally biased stretch (polar residues) spans 556–580 (NSQSTSEFVSPISDTENGSSSQQVS). A disordered region spans residues 556 to 581 (NSQSTSEFVSPISDTENGSSSQQVSE).

It localises to the cytoplasm. The protein localises to the nucleus. This is an uncharacterized protein from Schizosaccharomyces pombe (strain 972 / ATCC 24843) (Fission yeast).